The sequence spans 1378 residues: MAQTFLGQKRLRKYYGKIREVLEMPNLIEVQKSSYDLFLNSGDAPQPLDGEGIMGVFQSVFPIKDFNETSVLEFVKYELEKPKYDVEECMQRDMTYSAPLKVTLRLIVFDVDEDTGAKSVKDIKEQDVFMGDMPLMTPNGTFIVNGTERVIVSQMHRSPGVFFDHDKGKTHSSGKLLFACRIIPYRGSWLDFEFDAKDIVFARIDRRRKLPVTTLLYALGLDQEGIMDAYFKTVSYRLEKKRGWVTPFFPERVRGTRPTYDLIDAASGEVIAEAGKKVTPRAVKKLIEEGSVTDLLVPFDHIVGKFAAKDIINEETGAIYVEAGDELTLEYDKDGDLIGGTVKELIDNGVTNIPVLDIDNINVGPYIRNTMAQDKNMNRETALMDIYRVMRPGEPPTVEAASALFDTLFFDSERYDLSAVGRVKMNMRLDLDAADTQRTLRREDIIACIKALVELRDGKGDIDDIDHLGNRRVRSVGELMENQYRVGLLRMERAIKERMSSVEIDTVMPQDLINAKPAAAAVREFFGSSQLSQFMDQTNPLSEVTHKRRLSALGPGGLTRERAGFEVRDVHPTHYGRMCPIETPEGPNIGLINSLATFARVNKYGFIETPYRVVKGGQVTDEVHYMSATEEMRHTVAQANATLDENGKFVNELVNTRQAGDYTLAPMESVDLIDVSPKQLVSVAASLIPFLENDDANRALMGSNMQRQAVPLLRAEAPLVGTGIEEKVAIDSGAAIQAKRAGIIDQIDAQRIVIRATEDLELGDAGVDIYRMRKFQRSNQNTCINQRPLVKVGQQVSKGEVIADGPSTDMGELALGKNVVVAFMPWNGYNYEDSILISERIARDDVFTSIHIEEFEVAARDTKLGPEEITRDIPNVGEEALRNLDEAGIVYIGAEVQPGDILVGKITPKGESPMTPEEKLLRAIFGEKASDVRDTSLRVKPGDYGTVVEVRVFNRHGVDKDERALQIEREEVERLARDRDDELAILDRNIYARLKSLILGKTAVKGPKGIKPGSEITEELLETLTRGQWWMLALEGEQDAQIVEALNEQYELQKRALDARFEDKVEKVRRGDDLPPGVMKMVKVFIAVKRKLQPGDKMAGRHGNKGVISKVVPMEDMPFLADGTPVDFCLNPLGVPSRMNVGQILETHMGWAARGLGLNVDEALQEYRRSGDLTPVRDAMKHAYGEDVYAEGISGMDEDTLVEAAGNVTRGVPIATPVFDGAKEADVNDALTRAGFDTSGQSVLFDGRTGEQFARPVTVGIKYLLKLHHLVDDKIHARSTGPYSLVTQQPLGGKAQFGGQRFGEMEVWALEAYGAAYTLQEMLTVKSDDVAGRTKVYESIVKGEDNFEAGIPESFNVLVKEVRGLGLNMELLDAEVEE.

It belongs to the RNA polymerase beta chain family. In terms of assembly, the RNAP catalytic core consists of 2 alpha, 1 beta, 1 beta' and 1 omega subunit. When a sigma factor is associated with the core the holoenzyme is formed, which can initiate transcription.

The catalysed reaction is RNA(n) + a ribonucleoside 5'-triphosphate = RNA(n+1) + diphosphate. Its function is as follows. DNA-dependent RNA polymerase catalyzes the transcription of DNA into RNA using the four ribonucleoside triphosphates as substrates. In Ruegeria pomeroyi (strain ATCC 700808 / DSM 15171 / DSS-3) (Silicibacter pomeroyi), this protein is DNA-directed RNA polymerase subunit beta.